The following is a 215-amino-acid chain: Octanoyltransferase (215 aa).

One can recognise a BPL/LPL catalytic domain in the interval 31–206 (PDSQDEIWLV…QLVKHLDYAE (176 aa)). Substrate-binding positions include 70–77 (RGGQVTYH), 137–139 (SLG), and 150–152 (GLA). Residue Cys-168 is the Acyl-thioester intermediate of the active site.

The protein belongs to the LipB family.

Its subcellular location is the cytoplasm. The enzyme catalyses octanoyl-[ACP] + L-lysyl-[protein] = N(6)-octanoyl-L-lysyl-[protein] + holo-[ACP] + H(+). It participates in protein modification; protein lipoylation via endogenous pathway; protein N(6)-(lipoyl)lysine from octanoyl-[acyl-carrier-protein]: step 1/2. Its function is as follows. Catalyzes the transfer of endogenously produced octanoic acid from octanoyl-acyl-carrier-protein onto the lipoyl domains of lipoate-dependent enzymes. Lipoyl-ACP can also act as a substrate although octanoyl-ACP is likely to be the physiological substrate. This is Octanoyltransferase from Pseudomonas putida (strain ATCC 700007 / DSM 6899 / JCM 31910 / BCRC 17059 / LMG 24140 / F1).